Consider the following 157-residue polypeptide: Transcription elongation factor GreB (157 aa).

The protein belongs to the GreA/GreB family. GreB subfamily.

Functionally, necessary for efficient RNA polymerase transcription elongation past template-encoded arresting sites. The arresting sites in DNA have the property of trapping a certain fraction of elongating RNA polymerases that pass through, resulting in locked ternary complexes. Cleavage of the nascent transcript by cleavage factors such as GreA or GreB allows the resumption of elongation from the new 3'terminus. GreB releases sequences of up to 9 nucleotides in length. The polypeptide is Transcription elongation factor GreB (Salmonella typhimurium (strain LT2 / SGSC1412 / ATCC 700720)).